We begin with the raw amino-acid sequence, 471 residues long: MAAVATGNVDKLKSDVASLSQISENEKNGFINLVSRYVSGEEAQHVEWSKIQTPTDEVVVPYDGLAPTPEDPEEIKKLLDKLVVLKLNGGLGTTMGCTGPKSVIEVRNGLTFLDLIVIQIENLNNKYGSCVPLLLMNSFNTHDDTQKIVEKYSKSNVQIHTFNQSQYPRLVVEDFSPLPSKGQTGKDGWYPPGHGDVFPSLKNSGKLDLLLSQGKEYVFIANSDNLGAVVDLKILHHLIQKKNEYCMEVTPKTLADVKGGTLISYEGRVQLLEIAQVPDQHVNEFKSIEKFKIFNTNNLWVNLNAIKRLVEADALKMEIIPNPKEVDGVKVLQLETAAGAAIRFFNHAIGINVPRSRFLPVKATSDLLLVQSDLYTLQDGFVTRNSARKNPENPTIELGPEFKKVGSYLSRFKSIPSILELESLKVSGDVWFGAGVVLKGKVTITAKSGVKLEIPDNAVIANKDINGPEDL.

UTP-binding positions include 87–90 (LNGG), lysine 101, glutamine 164, and glycine 193. Residue 89–90 (GG) coordinates substrate. Residues histidine 194 and 222-224 (NSD) each bind substrate. Aspartate 224 and lysine 362 together coordinate UTP.

Belongs to the UDPGP type 1 family.

The protein localises to the cytoplasm. It carries out the reaction alpha-D-glucose 1-phosphate + UTP + H(+) = UDP-alpha-D-glucose + diphosphate. Its function is as follows. Plays a central role as a glucosyl donor in cellular metabolic pathways. This Pyrus pyrifolia (Chinese pear) protein is UTP--glucose-1-phosphate uridylyltransferase.